A 395-amino-acid polypeptide reads, in one-letter code: Vascular endothelial growth factor A, long form (395 aa).

Disordered regions lie at residues 1-45 and 73-175; these read MTDR…VEGV and EAEP…AGPG. Over residues 73 to 85 the composition is skewed to low complexity; it reads EAEPSGAARSASS. Acidic residues predominate over residues 91–102; it reads QPEEGEEEEEKE. 2 stretches are compositionally biased toward low complexity: residues 123–143 and 165–175; these read AAVC…ARAS and RRGSASRAGPG. Intrachain disulfides connect Cys-232-Cys-274, Cys-263-Cys-308, and Cys-267-Cys-310. Asn-281 is a glycosylation site (N-linked (GlcNAc...) asparagine). Residues 314–323 show a composition bias toward basic and acidic residues; that stretch reads KDRARQEKKS. Positions 314 to 344 are disordered; sequence KDRARQEKKSVRGKGKGQKRKRKKSRYKSWS. The span at 324 to 340 shows a compositional bias: basic residues; that stretch reads VRGKGKGQKRKRKKSRY.

The protein belongs to the PDGF/VEGF growth factor family. Homodimer; disulfide-linked. Also found as heterodimer with PGF. Interacts with NRP1. Interacts with isoform 2 of BSG. Interacts with CD82; this interaction inhibits VEGFA-mediated signaling pathway. In terms of processing, produced by use of an alternative upstream CUG codon and post-translationally processed into the N-terminal N-VEGF form and the C-terminal secreted VEGFA form. As to expression, higher expression in pituitary tumors than the pituitary gland. Widely expressed. In terms of tissue distribution, not widely expressed.

The protein resides in the cytoplasm. It localises to the nucleus. Its subcellular location is the secreted. It is found in the endoplasmic reticulum. The protein localises to the golgi apparatus. The protein resides in the extracellular space. It localises to the extracellular matrix. In terms of biological role, participates in the induction of key genes involved in the response to hypoxia and in the induction of angiogenesis such as HIF1A. Involved in protecting cells from hypoxia-mediated cell death. Functionally, growth factor active in angiogenesis, vasculogenesis and endothelial cell growth. Induces endothelial cell proliferation, promotes cell migration, inhibits apoptosis and induces permeabilization of blood vessels. Binds to the FLT1/VEGFR1 and KDR/VEGFR2 receptors, heparan sulfate and heparin. Binds to the NRP1/neuropilin-1 receptor. Binding to NRP1 initiates a signaling pathway needed for motor neuron axon guidance and cell body migration, including for the caudal migration of facial motor neurons from rhombomere 4 to rhombomere 6 during embryonic development. Also binds the DEAR/FBXW7-AS1 receptor. Its function is as follows. Binds to the KDR receptor but does not activate downstream signaling pathways, does not activate angiogenesis and inhibits tumor growth. In Homo sapiens (Human), this protein is Vascular endothelial growth factor A, long form (VEGFA).